A 476-amino-acid chain; its full sequence is MFAAGLAPFYASNFSLWSAAYCSSAGPGGCSFALDPAAVKKPSFCIADILHAGVGEPGPAAEGLVGASAALTAHLGSVHPHASFQAAARSPLRPTPVVAPSEVPAGFPQRLSPLSAAFHQHLPQQSPTQQQQPQQQPPPPPRAVSLQPPTSGTRVVPHHSGSAPAPSSKDLKFGIDRILSAEFDPKVKEGNTLRDLTSLLTGGRPAGVHLAGLQPSAGQFFASLDPISEASAILSPLSSNPRNSVQHQFQDTFPGPYAVLTKDTMPQTYKRKRSWSRAVFSNLQRKGLEKRFEIQKYVTKPDRKQLAAMLGLTDAQVKVWFQNRRMKWRHSKEAQAQKDKDKEAGEKPSGGVPAEGEREERSPSRSEGEAESESSDSESLDMAPSDTERTEGTERSLHQTTVIKASAAGALITASSSTSGSSFSFSSTSSLGSGNTHVGSASSLGGNCSELPSAHQPSVTSSPQSPEIAQAPLAGL.

Disordered stretches follow at residues Gln-120–Lys-169, Trp-328–Thr-401, and Thr-413–Leu-476. 2 stretches are compositionally biased toward low complexity: residues Pro-123 to Gln-134 and His-158 to Ser-168. The homeobox DNA-binding region spans Arg-273–Lys-332. Composition is skewed to basic and acidic residues over residues Ser-331–Glu-346 and Glu-355–Gly-368. Residues Glu-369–Ser-379 are compositionally biased toward acidic residues. Residues Asp-386–Leu-397 show a composition bias toward basic and acidic residues. Positions Thr-413 to Gly-434 are enriched in low complexity. Composition is skewed to polar residues over residues Asn-435–Gly-446 and His-455–Glu-467.

The protein belongs to the H2.0 homeobox family. In terms of tissue distribution, expressed in Th1 cells, CD8-positive T-cells, B-cells and NK cells.

The protein localises to the nucleus. Its function is as follows. Transcription factor required for TBX21/T-bet-dependent maturation of Th1 cells as well as maintenance of Th1-specific gene expression. Involved in embryogenesis and hematopoiesis. The sequence is that of H2.0-like homeobox protein (Hlx) from Mus musculus (Mouse).